Reading from the N-terminus, the 158-residue chain is S-ribosylhomocysteine lyase (158 aa).

Fe cation-binding residues include His-54, His-58, and Cys-124.

It belongs to the LuxS family. Homodimer. Requires Fe cation as cofactor.

It carries out the reaction S-(5-deoxy-D-ribos-5-yl)-L-homocysteine = (S)-4,5-dihydroxypentane-2,3-dione + L-homocysteine. In terms of biological role, involved in the synthesis of autoinducer 2 (AI-2) which is secreted by bacteria and is used to communicate both the cell density and the metabolic potential of the environment. The regulation of gene expression in response to changes in cell density is called quorum sensing. Catalyzes the transformation of S-ribosylhomocysteine (RHC) to homocysteine (HC) and 4,5-dihydroxy-2,3-pentadione (DPD). This is S-ribosylhomocysteine lyase from Lactiplantibacillus plantarum (strain ATCC BAA-793 / NCIMB 8826 / WCFS1) (Lactobacillus plantarum).